A 116-amino-acid chain; its full sequence is Chondroitin proteoglycan 7 (116 aa).

An N-terminal signal peptide occupies residues 1 to 19; sequence MQTITILALIACVAVPIFA. The disordered stretch occupies residues 29-102; it reads DVVESSGEGS…NAVVASDSPK (74 aa). Low complexity-rich tracts occupy residues 32–41 and 48–58; these read ESSGEGSGES and VESSGEGSGES. Residues S68, S72, S76, S84, and S88 are each glycosylated (O-linked (Xyl...) (chondroitin sulfate) serine).

This is Chondroitin proteoglycan 7 from Caenorhabditis elegans.